Consider the following 252-residue polypeptide: Fluoroquinolones export permease protein MT2760 (252 aa).

The next 6 helical transmembrane spans lie at 31 to 51 (VMLV…TPLF), 69 to 89 (LILT…LAAF), 119 to 139 (ATVM…SGIL), 148 to 168 (IPIG…ILAV), 176 to 196 (LAMV…PWFI), and 224 to 244 (TWWP…WVLF).

The complex is composed of 2 ATP-binding proteins and 2 transmembrane proteins.

The protein resides in the cell membrane. Its function is as follows. Part of the ABC transporter complex involved in fluoroquinolones export. Probably responsible for the translocation of the substrate across the membrane. In Mycobacterium tuberculosis (strain CDC 1551 / Oshkosh), this protein is Fluoroquinolones export permease protein MT2760.